Consider the following 38-residue polypeptide: Photosystem II reaction center protein X (38 aa).

The chain crosses the membrane as a helical span at residues Ile-9–Ile-29.

It belongs to the PsbX family. Type 1 subfamily. PSII is composed of 1 copy each of membrane proteins PsbA, PsbB, PsbC, PsbD, PsbE, PsbF, PsbH, PsbI, PsbJ, PsbK, PsbL, PsbM, PsbT, PsbX, PsbY, PsbZ, Psb30/Ycf12, at least 3 peripheral proteins of the oxygen-evolving complex and a large number of cofactors. It forms dimeric complexes.

It is found in the plastid. It localises to the chloroplast thylakoid membrane. Involved in the binding and/or turnover of quinones at the Q(B) site of photosystem II (PSII). PSII is a light-driven water plastoquinone oxidoreductase, using light energy to abstract electrons from H(2)O, generating a proton gradient subsequently used for ATP formation. This chain is Photosystem II reaction center protein X, found in Thalassiosira pseudonana (Marine diatom).